A 137-amino-acid chain; its full sequence is Small ribosomal subunit protein bS6 (137 aa).

The disordered stretch occupies residues leucine 99–glutamate 137. The segment covering alanine 105–glutamine 129 has biased composition (basic and acidic residues).

It belongs to the bacterial ribosomal protein bS6 family.

Binds together with bS18 to 16S ribosomal RNA. In Marinobacter nauticus (strain ATCC 700491 / DSM 11845 / VT8) (Marinobacter aquaeolei), this protein is Small ribosomal subunit protein bS6.